The chain runs to 432 residues: MGKNVVVLGTQWGDEGKGKVVDLLTERAQYVVRYQGGHNAGHTLVINGEKTVLHLIPSGILRENVTSIIGNGVVLAPDALMKEMGELEARGIPVRERLLLSEACPLILPYHVALDNAREKARGAKAIGTTGRGIGPAYEDKVARRGLRVSDLFNKETFAVKLKEIVDYHNFQLVNYYKVEAVDYQATLDYVLSIADILTAMVVDVSELLDGARKRGDLIMFEGAQGTLLDIDHGTYPYVTSSNTTAGGVATGSGIGPRYVDYVLGIVKAYSTRVGAGPFPTELFDETGEFLCKQGNEFGATTGRRRRTGWLDAVAVRRSVQINSLSGFCLTKLDVLDGLKEVKICVGYRMPDGREMTTTPLAAEGWEGIEPIYESMPGWSDTTFGVKEHSKLPQAALNYIKRIEELTGVPVDIISTGPDRSETMILRDPFDA.

Residues 13–19 (GDEGKGK) and 41–43 (GHT) each bind GTP. Catalysis depends on Asp-14, which acts as the Proton acceptor. Asp-14 and Gly-41 together coordinate Mg(2+). Residues 14-17 (DEGK), 39-42 (NAGH), Thr-130, Arg-144, Gln-225, Thr-240, and Arg-304 each bind IMP. His-42 serves as the catalytic Proton donor. 300 to 306 (ATTGRRR) contacts substrate. GTP-binding positions include Arg-306, 332–334 (KLD), and 415–417 (STG).

It belongs to the adenylosuccinate synthetase family. Homodimer. Mg(2+) serves as cofactor.

The protein resides in the cytoplasm. The enzyme catalyses IMP + L-aspartate + GTP = N(6)-(1,2-dicarboxyethyl)-AMP + GDP + phosphate + 2 H(+). Its pathway is purine metabolism; AMP biosynthesis via de novo pathway; AMP from IMP: step 1/2. Its function is as follows. Plays an important role in the de novo pathway of purine nucleotide biosynthesis. Catalyzes the first committed step in the biosynthesis of AMP from IMP. This is Adenylosuccinate synthetase from Serratia proteamaculans (strain 568).